The primary structure comprises 379 residues: UDP-4-amino-4-deoxy-L-arabinose--oxoglutarate aminotransferase (379 aa).

K182 is subject to N6-(pyridoxal phosphate)lysine.

Belongs to the DegT/DnrJ/EryC1 family. ArnB subfamily. In terms of assembly, homodimer. Pyridoxal 5'-phosphate is required as a cofactor.

The catalysed reaction is UDP-4-amino-4-deoxy-beta-L-arabinose + 2-oxoglutarate = UDP-beta-L-threo-pentopyranos-4-ulose + L-glutamate. Its pathway is nucleotide-sugar biosynthesis; UDP-4-deoxy-4-formamido-beta-L-arabinose biosynthesis; UDP-4-deoxy-4-formamido-beta-L-arabinose from UDP-alpha-D-glucuronate: step 2/3. It participates in bacterial outer membrane biogenesis; lipopolysaccharide biosynthesis. Its function is as follows. Catalyzes the conversion of UDP-4-keto-arabinose (UDP-Ara4O) to UDP-4-amino-4-deoxy-L-arabinose (UDP-L-Ara4N). The modified arabinose is attached to lipid A and is required for resistance to polymyxin and cationic antimicrobial peptides. The protein is UDP-4-amino-4-deoxy-L-arabinose--oxoglutarate aminotransferase of Escherichia coli O8 (strain IAI1).